Here is a 293-residue protein sequence, read N- to C-terminus: 4-diphosphocytidyl-2-C-methyl-D-erythritol kinase (293 aa).

Lys-11 is an active-site residue. An ATP-binding site is contributed by 96-106 (PVAAGLGGGSS). Residue Asp-138 is part of the active site.

This sequence belongs to the GHMP kinase family. IspE subfamily.

The enzyme catalyses 4-CDP-2-C-methyl-D-erythritol + ATP = 4-CDP-2-C-methyl-D-erythritol 2-phosphate + ADP + H(+). It functions in the pathway isoprenoid biosynthesis; isopentenyl diphosphate biosynthesis via DXP pathway; isopentenyl diphosphate from 1-deoxy-D-xylulose 5-phosphate: step 3/6. Catalyzes the phosphorylation of the position 2 hydroxy group of 4-diphosphocytidyl-2C-methyl-D-erythritol. The sequence is that of 4-diphosphocytidyl-2-C-methyl-D-erythritol kinase from Xanthobacter autotrophicus (strain ATCC BAA-1158 / Py2).